Reading from the N-terminus, the 659-residue chain is Threonine--tRNA ligase (659 aa).

The TGS domain maps to 7–70 (VQATVTVTFP…TDDATVEIIT (64 aa)). Positions 255 to 557 (DHRKLGAELE…LIEHTAGNFP (303 aa)) are catalytic. Residues Cys353, His404, and His534 each contribute to the Zn(2+) site.

This sequence belongs to the class-II aminoacyl-tRNA synthetase family. Homodimer. It depends on Zn(2+) as a cofactor.

The protein localises to the cytoplasm. The catalysed reaction is tRNA(Thr) + L-threonine + ATP = L-threonyl-tRNA(Thr) + AMP + diphosphate + H(+). Functionally, catalyzes the attachment of threonine to tRNA(Thr) in a two-step reaction: L-threonine is first activated by ATP to form Thr-AMP and then transferred to the acceptor end of tRNA(Thr). Also edits incorrectly charged L-seryl-tRNA(Thr). This chain is Threonine--tRNA ligase, found in Chlorobium phaeobacteroides (strain BS1).